Consider the following 327-residue polypeptide: Ubiquinone biosynthesis protein COQ4, mitochondrial (327 aa).

His-208, Asp-209, His-212, and Glu-224 together coordinate Zn(2+).

Belongs to the COQ4 family. In terms of assembly, component of a multi-subunit COQ enzyme complex, composed of at least COQ3, COQ4, COQ5, COQ6, COQ7 and COQ9. It depends on Zn(2+) as a cofactor.

Its subcellular location is the mitochondrion inner membrane. It carries out the reaction a 4-hydroxy-3-methoxy-5-(all-trans-polyprenyl)benzoate + H(+) = a 2-methoxy-6-(all-trans-polyprenyl)phenol + CO2. It participates in cofactor biosynthesis; ubiquinone biosynthesis. Functionally, lyase that catalyzes the C1-decarboxylation of 4-hydroxy-3-methoxy-5-(all-trans-polyprenyl)benzoic acid into 2-methoxy-6-(all-trans-polyprenyl)phenol during ubiquinone biosynthesis. The polypeptide is Ubiquinone biosynthesis protein COQ4, mitochondrial (Lachancea thermotolerans (strain ATCC 56472 / CBS 6340 / NRRL Y-8284) (Yeast)).